The chain runs to 284 residues: RNase adapter protein RapZ (284 aa).

8–15 (GRSGSGKS) serves as a coordination point for ATP. 56 to 59 (DVRN) contributes to the GTP binding site. Positions 266–284 (RSRGKNVQSRHRTLEKRKT) are RNA-binding.

Belongs to the RapZ-like family. RapZ subfamily. As to quaternary structure, homotrimer.

Its function is as follows. Modulates the synthesis of GlmS, by affecting the processing and stability of the regulatory small RNA GlmZ. When glucosamine-6-phosphate (GlcN6P) concentrations are high in the cell, RapZ binds GlmZ and targets it to cleavage by RNase E. Consequently, GlmZ is inactivated and unable to activate GlmS synthesis. Under low GlcN6P concentrations, RapZ is sequestered and inactivated by an other regulatory small RNA, GlmY, preventing GlmZ degradation and leading to synthesis of GlmS. The polypeptide is RNase adapter protein RapZ (Escherichia fergusonii (strain ATCC 35469 / DSM 13698 / CCUG 18766 / IAM 14443 / JCM 21226 / LMG 7866 / NBRC 102419 / NCTC 12128 / CDC 0568-73)).